The chain runs to 314 residues: DNA topoisomerase 1 (314 aa).

The region spanning 73–314 is the Topo IB-type catalytic domain; it reads GKMHVQRRNS…TDYITNTQTV (242 aa). The O-(3'-phospho-DNA)-tyrosine intermediate role is filled by Y273.

This sequence belongs to the type IB topoisomerase family.

It catalyses the reaction ATP-independent breakage of single-stranded DNA, followed by passage and rejoining.. Releases the supercoiling and torsional tension of DNA introduced during the DNA replication and transcription by transiently cleaving and rejoining one strand of the DNA duplex. Introduces a single-strand break via transesterification at a target site in duplex DNA. The scissile phosphodiester is attacked by the catalytic tyrosine of the enzyme, resulting in the formation of a DNA-(3'-phosphotyrosyl)-enzyme intermediate and the expulsion of a 5'-OH DNA strand. The free DNA strand then undergoes passage around the unbroken strand thus removing DNA supercoils. Finally, in the religation step, the DNA 5'-OH attacks the covalent intermediate to expel the active-site tyrosine and restore the DNA phosphodiester backbone. The polypeptide is DNA topoisomerase 1 (TOP1) (Oryctolagus cuniculus (Rabbit)).